Here is a 666-residue protein sequence, read N- to C-terminus: Secreted protein ARB_01864 (666 aa).

The N-terminal stretch at 1 to 18 is a signal peptide; the sequence is MRFSTLVSLAAWAAAALA. N160, N216, N342, N405, N594, N600, and N662 each carry an N-linked (GlcNAc...) asparagine glycan. The disordered stretch occupies residues 323–353; sequence RGSMKPRGVPNPTRRAIKGNATTSTQPYQHP.

It is found in the secreted. This chain is Secreted protein ARB_01864, found in Arthroderma benhamiae (strain ATCC MYA-4681 / CBS 112371) (Trichophyton mentagrophytes).